We begin with the raw amino-acid sequence, 439 residues long: UDP-N-acetylglucosamine--peptide N-acetylglucosaminyltransferase stabilizing protein GtfB (439 aa).

It belongs to the GtfB family. In terms of assembly, interacts with glycosyltransferase GtfA (Gtf2); probably forms a heterotetramer with 2 subunits each of GtfA and GtfB. Part of the accessory SecA2/SecY2 protein translocation apparatus.

It is found in the cell membrane. It participates in protein modification; protein glycosylation. Required for the polymorphic O-glycosylation of the serine-rich repeat protein Fap1. A stabilizing protein that is part of the accessory SecA2/SecY2 system specifically required to export Fap1, a serine-rich fimbrial adhesin encoded upstream in the same operon. The GtfA-GtfB (Gtf1-Gtf2 in this bacteria) complex adds GlcNAc from UDP-GlcNAc to Fap1, attaching the first sugar residue. Cannot use not UDP-Glc as substrate. Stabilizes the glycosylation activity of GtfA, causing it to partially localize to the cellular membrane where it is more protease resistant. In Streptococcus parasanguinis, this protein is UDP-N-acetylglucosamine--peptide N-acetylglucosaminyltransferase stabilizing protein GtfB.